The chain runs to 198 residues: GTP cyclohydrolase-2 (198 aa).

52 to 56 lines the GTP pocket; sequence RMHSE. Residues Cys57, Cys68, and Cys70 each contribute to the Zn(2+) site. GTP is bound by residues Gln73, 94–96, and Thr116; that span reads EGR. The active-site Proton acceptor is Asp128. Arg130 functions as the Nucleophile in the catalytic mechanism. The GTP site is built by Thr151 and Lys156.

It belongs to the GTP cyclohydrolase II family. The cofactor is Zn(2+).

The enzyme catalyses GTP + 4 H2O = 2,5-diamino-6-hydroxy-4-(5-phosphoribosylamino)-pyrimidine + formate + 2 phosphate + 3 H(+). The protein operates within cofactor biosynthesis; riboflavin biosynthesis; 5-amino-6-(D-ribitylamino)uracil from GTP: step 1/4. Functionally, catalyzes the conversion of GTP to 2,5-diamino-6-ribosylamino-4(3H)-pyrimidinone 5'-phosphate (DARP), formate and pyrophosphate. This Vibrio vulnificus (strain CMCP6) protein is GTP cyclohydrolase-2.